An 861-amino-acid polypeptide reads, in one-letter code: Probable linoleate 9S-lipoxygenase 7 (861 aa).

A PLAT domain is found at 29 to 160 (NVLDFTDLAG…NYKSDRIFFA (132 aa)). One can recognise a Lipoxygenase domain in the interval 163 to 861 (PYLPSETPEL…GKGIPNSVSI (699 aa)). Positions 220–246 (TLGGSAEYPYPRRGRTGRPPTRTDPKS) are disordered. Fe cation contacts are provided by His522, His527, His713, Asn717, and Ile861.

This sequence belongs to the lipoxygenase family. In terms of assembly, monomer. Fe cation is required as a cofactor. As to expression, expressed in tubers. Detected in sprouts and flowers. but not in leaves or stems.

The protein resides in the cytoplasm. It catalyses the reaction (9Z,12Z)-octadecadienoate + O2 = (9S)-hydroperoxy-(10E,12Z)-octadecadienoate. It participates in lipid metabolism; oxylipin biosynthesis. In terms of biological role, plant lipoxygenases may be involved in a number of diverse aspects of plant physiology including growth and development, pest resistance, and senescence or responses to wounding. Catalyzes the hydroperoxidation of lipids containing a cis,cis-1,4-pentadiene structure. This chain is Probable linoleate 9S-lipoxygenase 7 (LOX1.7), found in Solanum tuberosum (Potato).